Reading from the N-terminus, the 313-residue chain is Protein-methionine-sulfoxide reductase catalytic subunit MsrP (313 aa).

The tat-type signal signal peptide spans 1 to 46; sequence MPSYRAPKIAAAEITPERFFLDRRTFIAAAAGSLALSVPKPSRAAA. Residues N70, 73–74, C127, T162, N212, R217, and 228–230 each bind Mo-molybdopterin; these read YE and GIK.

This sequence belongs to the MsrP family. In terms of assembly, heterodimer of a catalytic subunit (MsrP) and a heme-binding subunit (MsrQ). It depends on Mo-molybdopterin as a cofactor. Predicted to be exported by the Tat system. The position of the signal peptide cleavage has not been experimentally proven.

It localises to the periplasm. It carries out the reaction L-methionyl-[protein] + a quinone + H2O = L-methionyl-(S)-S-oxide-[protein] + a quinol. The enzyme catalyses L-methionyl-[protein] + a quinone + H2O = L-methionyl-(R)-S-oxide-[protein] + a quinol. In terms of biological role, part of the MsrPQ system that repairs oxidized periplasmic proteins containing methionine sulfoxide residues (Met-O), using respiratory chain electrons. Thus protects these proteins from oxidative-stress damage caused by reactive species of oxygen and chlorine generated by the host defense mechanisms. MsrPQ is essential for the maintenance of envelope integrity under bleach stress, rescuing a wide series of structurally unrelated periplasmic proteins from methionine oxidation. The catalytic subunit MsrP is non-stereospecific, being able to reduce both (R-) and (S-) diastereoisomers of methionine sulfoxide. This Rhizobium meliloti (strain 1021) (Ensifer meliloti) protein is Protein-methionine-sulfoxide reductase catalytic subunit MsrP.